The primary structure comprises 290 residues: Arylamine N-acetyltransferase, pineal gland isozyme NAT-3 (290 aa).

Catalysis depends on Cys-68, which acts as the Acyl-thioester intermediate. Active-site residues include His-107 and Asp-122.

This sequence belongs to the arylamine N-acetyltransferase family.

It catalyses the reaction an arylamine + acetyl-CoA = an N-acetylarylamine + CoA. The catalysed reaction is an N-hydroxyarylamine + acetyl-CoA = an N-acetoxyarylamine + CoA. Catalyzes the N- or O-acetylation of various arylamine and heterocyclic amine substrates, and participates in the detoxification of a plethora of hydrazine and arylamine drugs. This chain is Arylamine N-acetyltransferase, pineal gland isozyme NAT-3, found in Gallus gallus (Chicken).